Reading from the N-terminus, the 366-residue chain is Fructose-bisphosphate aldolase 2 (366 aa).

The substrate site is built by Arg60 and Lys150. Glu191 serves as the catalytic Proton acceptor. The active-site Schiff-base intermediate with dihydroxyacetone-P is the Lys233.

Belongs to the class I fructose-bisphosphate aldolase family.

It carries out the reaction beta-D-fructose 1,6-bisphosphate = D-glyceraldehyde 3-phosphate + dihydroxyacetone phosphate. It participates in carbohydrate degradation; glycolysis; D-glyceraldehyde 3-phosphate and glycerone phosphate from D-glucose: step 4/4. The polypeptide is Fructose-bisphosphate aldolase 2 (aldo-2) (Caenorhabditis elegans).